Reading from the N-terminus, the 80-residue chain is Myrmicitoxin(1)-Pr1a (80 aa).

The first 23 residues, 1-23 (MEIPKLLYIAVIAIGLSGSLTWA), serve as a signal peptide directing secretion. A propeptide spanning residues 24-57 (TPLANPLAEAEAEAKATAEATAEALAEALAEPEP) is cleaved from the precursor. Phenylalanine amide is present on Phe-79.

This sequence belongs to the formicidae venom clade 1 family. Expressed by the venom gland.

The protein localises to the secreted. In terms of biological role, vertebrate-selective toxin that causes pain by targeting voltage-gated sodium channels. The polypeptide is Myrmicitoxin(1)-Pr1a (Pogonomyrmex rugosus (Desert harvester ant)).